A 250-amino-acid chain; its full sequence is tRNA (guanine-N(1)-)-methyltransferase (250 aa).

S-adenosyl-L-methionine contacts are provided by residues glycine 115 and 135-140; that span reads LGDFVL.

Belongs to the RNA methyltransferase TrmD family. In terms of assembly, homodimer.

The protein resides in the cytoplasm. The catalysed reaction is guanosine(37) in tRNA + S-adenosyl-L-methionine = N(1)-methylguanosine(37) in tRNA + S-adenosyl-L-homocysteine + H(+). Its function is as follows. Specifically methylates guanosine-37 in various tRNAs. The protein is tRNA (guanine-N(1)-)-methyltransferase of Legionella pneumophila (strain Lens).